A 457-amino-acid polypeptide reads, in one-letter code: V-type ATP synthase beta chain (457 aa).

It belongs to the ATPase alpha/beta chains family.

Produces ATP from ADP in the presence of a proton gradient across the membrane. The V-type beta chain is a regulatory subunit. In Clostridioides difficile (strain 630) (Peptoclostridium difficile), this protein is V-type ATP synthase beta chain.